The sequence spans 232 residues: dITP/XTP pyrophosphatase (232 aa).

A substrate-binding site is contributed by 10–15 (TRNKGK). Asp-72 acts as the Proton acceptor in catalysis. Mg(2+) is bound at residue Asp-72. Substrate-binding positions include Ser-73, 153–156 (FGYD), Lys-176, and 181–182 (HR).

This sequence belongs to the HAM1 NTPase family. As to quaternary structure, homodimer. Requires Mg(2+) as cofactor.

The enzyme catalyses XTP + H2O = XMP + diphosphate + H(+). The catalysed reaction is dITP + H2O = dIMP + diphosphate + H(+). It catalyses the reaction ITP + H2O = IMP + diphosphate + H(+). Functionally, pyrophosphatase that catalyzes the hydrolysis of nucleoside triphosphates to their monophosphate derivatives, with a high preference for the non-canonical purine nucleotides XTP (xanthosine triphosphate), dITP (deoxyinosine triphosphate) and ITP. Seems to function as a house-cleaning enzyme that removes non-canonical purine nucleotides from the nucleotide pool, thus preventing their incorporation into DNA/RNA and avoiding chromosomal lesions. The chain is dITP/XTP pyrophosphatase from Syntrophobacter fumaroxidans (strain DSM 10017 / MPOB).